The primary structure comprises 125 residues: MAFDKDAFLTALDSMTVLELNDLVKAIEEKFGVSAAAMAAPAAAGGGGAAAAAEEKTEFNVVLLEAGANKVSVIKAVREITGLGLKEAKDLVDGAPKNVKEAAPKADADAAKKKLEDAGAKVELK.

This sequence belongs to the bacterial ribosomal protein bL12 family. Homodimer. Part of the ribosomal stalk of the 50S ribosomal subunit. Forms a multimeric L10(L12)X complex, where L10 forms an elongated spine to which 2 to 4 L12 dimers bind in a sequential fashion. Binds GTP-bound translation factors.

In terms of biological role, forms part of the ribosomal stalk which helps the ribosome interact with GTP-bound translation factors. Is thus essential for accurate translation. The sequence is that of Large ribosomal subunit protein bL12 from Polaromonas sp. (strain JS666 / ATCC BAA-500).